The chain runs to 1115 residues: DNA-directed RNA polymerase subunit beta (1115 aa).

Residues 1084-1115 (HEAGEGEDDEYFEEDEEAVDDEPMTFDDDDME) are disordered. Positions 1088–1115 (EGEDDEYFEEDEEAVDDEPMTFDDDDME) are enriched in acidic residues.

It belongs to the RNA polymerase beta chain family. In terms of assembly, the RNAP catalytic core consists of 2 alpha, 1 beta, 1 beta' and 1 omega subunit. When a sigma factor is associated with the core the holoenzyme is formed, which can initiate transcription.

It catalyses the reaction RNA(n) + a ribonucleoside 5'-triphosphate = RNA(n+1) + diphosphate. In terms of biological role, DNA-dependent RNA polymerase catalyzes the transcription of DNA into RNA using the four ribonucleoside triphosphates as substrates. The protein is DNA-directed RNA polymerase subunit beta of Desulfitobacterium hafniense (strain DSM 10664 / DCB-2).